The sequence spans 323 residues: L-lactate dehydrogenase 1 (323 aa).

NAD(+)-binding positions include Val-17, Asp-38, Arg-43, Tyr-68, and 82 to 83 (GA). Substrate-binding residues include Gln-85 and Arg-91. NAD(+) is bound by residues Ser-104, 121-123 (AAN), and Ser-146. Position 123–126 (123–126 (NPVD)) interacts with substrate. 151–154 (DTGR) contributes to the substrate binding site. The active-site Proton acceptor is His-178. A Phosphotyrosine modification is found at Tyr-223. Substrate is bound at residue Thr-232.

The protein belongs to the LDH/MDH superfamily. LDH family. Homotetramer.

It is found in the cytoplasm. It catalyses the reaction (S)-lactate + NAD(+) = pyruvate + NADH + H(+). It functions in the pathway fermentation; pyruvate fermentation to lactate; (S)-lactate from pyruvate: step 1/1. Functionally, catalyzes the conversion of lactate to pyruvate. The polypeptide is L-lactate dehydrogenase 1 (Lactobacillus johnsonii (strain CNCM I-12250 / La1 / NCC 533)).